The chain runs to 1011 residues: DNA-directed RNA polymerase 2, chloroplastic/mitochondrial (1011 aa).

A disordered region spans residues 307-326; that stretch reads KGDDNEESGGVENETSMKEQ. Catalysis depends on residues D712, K787, and D944.

It belongs to the phage and mitochondrial RNA polymerase family. In terms of assembly, interacts with NIP1 and NIP2.

The protein resides in the plastid. It is found in the chloroplast. The protein localises to the mitochondrion. The enzyme catalyses RNA(n) + a ribonucleoside 5'-triphosphate = RNA(n+1) + diphosphate. Its function is as follows. DNA-dependent RNA polymerase catalyzes the transcription of DNA into RNA using the four ribonucleoside triphosphates as substrates. This Arabidopsis thaliana (Mouse-ear cress) protein is DNA-directed RNA polymerase 2, chloroplastic/mitochondrial (RPOT2).